Consider the following 445-residue polypeptide: Trigger factor (445 aa).

The 86-residue stretch at 162–247 (GDQVTIDAIG…IKAVHTAEPT (86 aa)) folds into the PPIase FKBP-type domain.

It belongs to the FKBP-type PPIase family. Tig subfamily.

Its subcellular location is the cytoplasm. The enzyme catalyses [protein]-peptidylproline (omega=180) = [protein]-peptidylproline (omega=0). Involved in protein export. Acts as a chaperone by maintaining the newly synthesized protein in an open conformation. Functions as a peptidyl-prolyl cis-trans isomerase. The protein is Trigger factor of Rickettsia akari (strain Hartford).